Consider the following 412-residue polypeptide: MNYPVEHYPIDRVRADFPILQQSVNGQPLAYLDSAASAQKPLAVIDRERDFYLHEYAAVHRGIHTLSARATSAMEEVRAKVATFIHAASAEDIVFVRGTTEAINLVANSYGRTAFQPGDNLVISEMEHHANIVPWQMLAQARGLTLRVLPITDDGELDMAQLPALLDERTRLVAVTQVSNVLGTVNPLAEIIRQAHACGAKVLVDGAQAVMHQAVDVQALDCDFYAFSGHKLYGPSGIGVLYGKSELLQAMPPWEGGGAMIREVSLTQGTTYADPPWRFEAGSPHVAGIIGLGAALDYVSALGVDAIQAHEGLLMRYALASLAEVPTLRLYGPVHRQGVIAFNLGRHHAFDVGSFLDQYGIAIRTGHHCAMPLMSRYGVPSMCRASLALYSCQDEIDRLVAGLHRIHRLLGE.

Position 231 is an N6-(pyridoxal phosphate)lysine (Lys-231). The active-site Cysteine persulfide intermediate is the Cys-369.

Belongs to the class-V pyridoxal-phosphate-dependent aminotransferase family. Csd subfamily. Homodimer. Interacts with SufE and the SufBCD complex composed of SufB, SufC and SufD. The interaction with SufE is required to mediate the direct transfer of the sulfur atom from the S-sulfanylcysteine. Pyridoxal 5'-phosphate is required as a cofactor.

It is found in the cytoplasm. It carries out the reaction (sulfur carrier)-H + L-cysteine = (sulfur carrier)-SH + L-alanine. It catalyses the reaction L-selenocysteine + AH2 = hydrogenselenide + L-alanine + A + H(+). Its pathway is cofactor biosynthesis; iron-sulfur cluster biosynthesis. Functionally, cysteine desulfurases mobilize the sulfur from L-cysteine to yield L-alanine, an essential step in sulfur metabolism for biosynthesis of a variety of sulfur-containing biomolecules. Component of the suf operon, which is activated and required under specific conditions such as oxidative stress and iron limitation. Acts as a potent selenocysteine lyase in vitro, that mobilizes selenium from L-selenocysteine. Selenocysteine lyase activity is however unsure in vivo. In Dickeya dadantii (strain 3937) (Erwinia chrysanthemi (strain 3937)), this protein is Cysteine desulfurase (sufS).